A 288-amino-acid polypeptide reads, in one-letter code: Bifunctional protein FolD (288 aa).

Residues 163 to 165 (GRS), serine 188, and isoleucine 229 contribute to the NADP(+) site.

It belongs to the tetrahydrofolate dehydrogenase/cyclohydrolase family. Homodimer.

It catalyses the reaction (6R)-5,10-methylene-5,6,7,8-tetrahydrofolate + NADP(+) = (6R)-5,10-methenyltetrahydrofolate + NADPH. It carries out the reaction (6R)-5,10-methenyltetrahydrofolate + H2O = (6R)-10-formyltetrahydrofolate + H(+). It participates in one-carbon metabolism; tetrahydrofolate interconversion. Catalyzes the oxidation of 5,10-methylenetetrahydrofolate to 5,10-methenyltetrahydrofolate and then the hydrolysis of 5,10-methenyltetrahydrofolate to 10-formyltetrahydrofolate. This Campylobacter curvus (strain 525.92) protein is Bifunctional protein FolD.